The following is a 404-amino-acid chain: Cysteine desulfurase IscS (404 aa).

Pyridoxal 5'-phosphate contacts are provided by residues 75 to 76, N155, Q183, and 203 to 205; these read AT and SGH. K206 is subject to N6-(pyridoxal phosphate)lysine. Pyridoxal 5'-phosphate is bound at residue T243. C328 serves as the catalytic Cysteine persulfide intermediate. C328 contacts [2Fe-2S] cluster.

It belongs to the class-V pyridoxal-phosphate-dependent aminotransferase family. NifS/IscS subfamily. Homodimer. Forms a heterotetramer with IscU, interacts with other sulfur acceptors. The cofactor is pyridoxal 5'-phosphate.

The protein localises to the cytoplasm. It carries out the reaction (sulfur carrier)-H + L-cysteine = (sulfur carrier)-SH + L-alanine. It functions in the pathway cofactor biosynthesis; iron-sulfur cluster biosynthesis. Master enzyme that delivers sulfur to a number of partners involved in Fe-S cluster assembly, tRNA modification or cofactor biosynthesis. Catalyzes the removal of elemental sulfur atoms from cysteine to produce alanine. Functions as a sulfur delivery protein for Fe-S cluster synthesis onto IscU, an Fe-S scaffold assembly protein, as well as other S acceptor proteins. In Shewanella pealeana (strain ATCC 700345 / ANG-SQ1), this protein is Cysteine desulfurase IscS.